The following is a 120-amino-acid chain: Small ribosomal subunit protein eS25 (120 aa).

A disordered region spans residues methionine 1–serine 32. A compositionally biased stretch (basic residues) spans glycine 19–serine 28.

Belongs to the eukaryotic ribosomal protein eS25 family.

The polypeptide is Small ribosomal subunit protein eS25 (RPS25) (Leishmania infantum).